The following is a 188-amino-acid chain: Multiple organellar RNA editing factor 7, mitochondrial (188 aa).

Residues 1–20 constitute a mitochondrion transit peptide; sequence MARIIRRPLNLTAAVRFRLS. The interval 169-188 is disordered; the sequence is DAKSGVVKKKHRRKRKKKLI. Residues 174–188 are compositionally biased toward basic residues; sequence VVKKKHRRKRKKKLI.

It belongs to the MORF family. Heterodimers with MORF8/RIP1, MORF5/RIP5 and MORF6/RIP6.

It localises to the mitochondrion. Functionally, involved in organellar RNA editing. Required for the processing of few RNA editing sites in mitochondria. In Arabidopsis thaliana (Mouse-ear cress), this protein is Multiple organellar RNA editing factor 7, mitochondrial.